A 465-amino-acid polypeptide reads, in one-letter code: UPF0324 membrane protein CC_0425 (465 aa).

Residues H97–R132 are disordered. Basic residues predominate over residues Q115–R132. A run of 10 helical transmembrane segments spans residues A135–V157, L172–L194, A219–A241, L251–S273, T286–A308, A318–S340, L352–Q374, I378–L400, P405–S427, and L442–F464.

The protein belongs to the UPF0324 family.

It is found in the cell membrane. The chain is UPF0324 membrane protein CC_0425 from Caulobacter vibrioides (strain ATCC 19089 / CIP 103742 / CB 15) (Caulobacter crescentus).